The chain runs to 357 residues: Cobalt-precorrin-5B C(1)-methyltransferase (357 aa).

It belongs to the CbiD family.

The enzyme catalyses Co-precorrin-5B + S-adenosyl-L-methionine = Co-precorrin-6A + S-adenosyl-L-homocysteine. It functions in the pathway cofactor biosynthesis; adenosylcobalamin biosynthesis; cob(II)yrinate a,c-diamide from sirohydrochlorin (anaerobic route): step 6/10. Functionally, catalyzes the methylation of C-1 in cobalt-precorrin-5B to form cobalt-precorrin-6A. This chain is Cobalt-precorrin-5B C(1)-methyltransferase, found in Paramagnetospirillum magneticum (strain ATCC 700264 / AMB-1) (Magnetospirillum magneticum).